A 547-amino-acid chain; its full sequence is Probable FMN/FAD exporter YeeO (547 aa).

11 consecutive transmembrane segments (helical) span residues 94 to 114 (ITPL…MGVL), 139 to 159 (VIMA…AFSL), 174 to 194 (SLVI…HFGE), 211 to 231 (LALT…ITLI), 246 to 268 (LLIN…YGLF), 281 to 301 (GLTI…AIGF), 318 to 338 (FSII…SVLF), 350 to 370 (AGMG…AALI), 404 to 424 (VFWL…PFAG), 439 to 459 (VVVI…ASWV), and 486 to 506 (VVVG…VWMG).

This sequence belongs to the multi antimicrobial extrusion (MATE) (TC 2.A.66.1) family.

It is found in the cell inner membrane. A transporter able to export peptides and flavins. When overexpressed allows cells deleted for multiple peptidases (pepA, pepB, pepD and pepN) to grow in the presence of dipeptides Ala-Gln or Gly-Tyr which otherwise inhibit growth. Cells overexpressing this protein have decreased intracellular levels of Ala-Gln dipeptide, and in a system that produces the Ala-Gln dipeptide, overproduction of this protein increases its export. When overexpressed increases secretion of FMN and FAD but not riboflavin; intracellular concentrations of FMN and riboflavin rise, possibly to compensate for increased secretion. Increased overexpression causes slight cell elongation. The chain is Probable FMN/FAD exporter YeeO (yeeO) from Escherichia coli (strain K12).